A 617-amino-acid polypeptide reads, in one-letter code: Dihydroxy-acid dehydratase (617 aa).

Position 81 (Asp81) interacts with Mg(2+). Cys122 contacts [2Fe-2S] cluster. Residues Asp123 and Lys124 each coordinate Mg(2+). Position 124 is an N6-carboxylysine (Lys124). Residue Cys197 participates in [2Fe-2S] cluster binding. Glu494 provides a ligand contact to Mg(2+). The Proton acceptor role is filled by Ser520.

This sequence belongs to the IlvD/Edd family. In terms of assembly, homodimer. Requires [2Fe-2S] cluster as cofactor. It depends on Mg(2+) as a cofactor.

It catalyses the reaction (2R)-2,3-dihydroxy-3-methylbutanoate = 3-methyl-2-oxobutanoate + H2O. The enzyme catalyses (2R,3R)-2,3-dihydroxy-3-methylpentanoate = (S)-3-methyl-2-oxopentanoate + H2O. Its pathway is amino-acid biosynthesis; L-isoleucine biosynthesis; L-isoleucine from 2-oxobutanoate: step 3/4. The protein operates within amino-acid biosynthesis; L-valine biosynthesis; L-valine from pyruvate: step 3/4. In terms of biological role, functions in the biosynthesis of branched-chain amino acids. Catalyzes the dehydration of (2R,3R)-2,3-dihydroxy-3-methylpentanoate (2,3-dihydroxy-3-methylvalerate) into 2-oxo-3-methylpentanoate (2-oxo-3-methylvalerate) and of (2R)-2,3-dihydroxy-3-methylbutanoate (2,3-dihydroxyisovalerate) into 2-oxo-3-methylbutanoate (2-oxoisovalerate), the penultimate precursor to L-isoleucine and L-valine, respectively. The polypeptide is Dihydroxy-acid dehydratase (Parafrankia sp. (strain EAN1pec)).